The chain runs to 207 residues: Ribosome maturation factor RimM (207 aa).

Positions 114 to 207 (DDEYYWVDLI…RIDSDWPLDY (94 aa)) constitute a PRC barrel domain.

It belongs to the RimM family. As to quaternary structure, binds ribosomal protein uS19.

The protein localises to the cytoplasm. In terms of biological role, an accessory protein needed during the final step in the assembly of 30S ribosomal subunit, possibly for assembly of the head region. Essential for efficient processing of 16S rRNA. May be needed both before and after RbfA during the maturation of 16S rRNA. It has affinity for free ribosomal 30S subunits but not for 70S ribosomes. The protein is Ribosome maturation factor RimM of Bordetella pertussis (strain Tohama I / ATCC BAA-589 / NCTC 13251).